A 291-amino-acid polypeptide reads, in one-letter code: Polyamine aminopropyltransferase (291 aa).

The PABS domain occupies 5–245 (PGPISLIEPL…YAVNYILGSL (241 aa)). Residue glutamine 36 participates in S-methyl-5'-thioadenosine binding. 2 residues coordinate spermidine: histidine 67 and glutamate 91. Residues aspartate 111 and 143-144 (DG) contribute to the S-methyl-5'-thioadenosine site. The Proton acceptor role is filled by aspartate 164.

Belongs to the spermidine/spermine synthase family. As to quaternary structure, homodimer or homotetramer.

The protein resides in the cytoplasm. It carries out the reaction S-adenosyl 3-(methylsulfanyl)propylamine + putrescine = S-methyl-5'-thioadenosine + spermidine + H(+). It participates in amine and polyamine biosynthesis; spermidine biosynthesis; spermidine from putrescine: step 1/1. Functionally, catalyzes the irreversible transfer of a propylamine group from the amino donor S-adenosylmethioninamine (decarboxy-AdoMet) to putrescine (1,4-diaminobutane) to yield spermidine. In Pyrobaculum neutrophilum (strain DSM 2338 / JCM 9278 / NBRC 100436 / V24Sta) (Thermoproteus neutrophilus), this protein is Polyamine aminopropyltransferase.